The chain runs to 979 residues: MRLPGRPGGPGGSGGLRVLLCLLLLGSRPGGCNAISAHGCLFDRRLCSHLEVCIQDGLFGQCQVGVGQARPLLQVTSPVLQRLQGVLRQLMSQGLSWHDDLTQYVISQEMERIPRLRPPEPHPRDRSGLVPRRPGPAGELLLQGIPTGSAPALQHRLPRPSVGGGRAGAGSPLSPLQAELLPPLLEHLLLPPQPPHPALSYEPALLQPYLFHQFGSRDGSRGSESSPGMVSVDPLPKAEAPAFLSRAGSKGMFGAHPGHSYGDPPGPPPAQLFQESELFYLAQESQVPSRTRAPRLPEPGGSSRAGDSSEGYEEEGLEGREEKPPAPAEQPDVTLQRVAAVLAGYGVELHQLTPEQLSTLSTLLQLLPKGSRQNPGGAVNVGADIKKTMEEQVQGEDPAEPPPPMPSLPGSPTGSSTSNKAQKELSTGASEPPKAAGPPATPVLVEKKSPLGQNQPTMAGQPSTRPSAEEYGYIVTDQKPLSLAAGVRLLEILAEHVHMSSGSFINISVVGPALTFRIRHNEQNLSLADVTQQAGLVKSELEAQTGLQILQTGVGQREEAAAILPRPAHSTSPMRSVLLTLVALAGVAGLLVALAVALCVRQHARQRDKERLAALGPEGAHGDTTFEYQDLCRQHMATKSLFNRAEGPPEPSRVSSVSSQFSDAAQASPSSHSSTPSWCEEPAQANMDISTGHMILAYMEDHLRNRDRLAKEWQALCAYQAEPNTCATAQGEGNIKKNRHPDFLPYDHARIKLKVESSPSRSDYINASPIIEHDPRMPAYIATQGPLSHTIADFWQMVWESGCTVIVMLTPLVEDGVKQCDRYWPDEGSSLYHVYEVNLVSEHIWCEDFLVRSFYLKNVQTQETRTLTQFHFLSWPAEGTPASTRPLLDFRRKVNKCYRGRSCPIIVHCSDGAGRTGTYILIDMVLNRMAKGVKEIDIAATLEHVRDQRPGLVRSKDQFEFALTAVAEEVNAILKALPQ.

The signal sequence occupies residues 1 to 34; it reads MRLPGRPGGPGGSGGLRVLLCLLLLGSRPGGCNA. The interval 35 to 131 is RESP18 homology domain; that stretch reads ISAHGCLFDR…HPRDRSGLVP (97 aa). Residues 35–575 are Lumenal-facing; sequence ISAHGCLFDR…RPAHSTSPMR (541 aa). Cys53 and Cys62 form a disulfide bridge. The span at 113–127 shows a compositional bias: basic and acidic residues; that stretch reads IPRLRPPEPHPRDRS. Disordered stretches follow at residues 113–171, 248–272, 285–332, and 391–466; these read IPRL…GAGS, GSKG…PAQL, SQVP…EQPD, and EQVQ…STRP. A phosphoserine mark is found at Ser308 and Ser309. The segment covering 400 to 409 has biased composition (pro residues); sequence EPPPPMPSLP. A sufficient for dimerization of proICA512 region spans residues 449–575; sequence SPLGQNQPTM…RPAHSTSPMR (127 aa). Residues 451 to 466 show a composition bias toward polar residues; the sequence is LGQNQPTMAGQPSTRP. 2 N-linked (GlcNAc...) asparagine glycosylation sites follow: Asn506 and Asn524. The helical transmembrane segment at 576–600 threads the bilayer; it reads SVLLTLVALAGVAGLLVALAVALCV. The interval 601-732 is sufficient for dimerization of proICA512; it reads RQHARQRDKE…PNTCATAQGE (132 aa). At 601–979 the chain is on the cytoplasmic side; it reads RQHARQRDKE…VNAILKALPQ (379 aa). The interval 643–680 is disordered; it reads NRAEGPPEPSRVSSVSSQFSDAAQASPSSHSSTPSWCE. Low complexity predominate over residues 652–677; the sequence is SRVSSVSSQFSDAAQASPSSHSSTPS. In terms of domain architecture, Tyrosine-protein phosphatase spans 709–969; the sequence is LAKEWQALCA…EFALTAVAEE (261 aa). Lys754 participates in a covalent cross-link: Glycyl lysine isopeptide (Lys-Gly) (interchain with G-Cter in SUMO).

It belongs to the protein-tyrosine phosphatase family. Receptor class 8 subfamily. As to quaternary structure, homodimer; shown for the unprocessed protein (proICA512) in the endoplasmic reticulum and resolved during protein maturation as ICA512-TMF seems to be predominantly monomeric in secretory granules; however, ICA512-CCF interacts with ICA512-TMF disrupting the ICA512-TMF:SNTB2 complex. The isolated lumenal RESP18 homology domain has been shown to form disulfide-linked homooligomers. Interacts (via cytoplasmic domain) with phosphorylated SNTB2; this protects PTPRN against cleavage by CAPN1 to produce ICA512-CCF. Dephosphorylation of SNTB2 upon insulin stimulation disrupts the interaction and results in PTPRN cleavage. Interacts with SNX19. ICA512-CCF interacts with PIAS4; in the nucleus. Interacts with STAT5B (phosphorylated); down-regulated by ICA512-CCF sumoylation; ICA512-CCF prevents STAT5B dephosphorylation; ICA512-CCF mediates interaction of STAT5B with PIAS4. Interacts (via RESP18 homology domain) with insulin and proinsulin. Interacts with PTPRN2, PTPRA and PTPRE. N-glycosylated. Post-translationally, O-glycosylated. In terms of processing, subject to proteolytic cleavage at multiple sites. Subject to cleavage on a pair of basic residues. On exocytosis of secretory granules in pancreatic beta-cells ICA512-TMF is transiently inserted in the plasma-membrane and cleaved by mu-type calpain CPN1 to yield ICA512-CCF. Sumoylated at two sites including Lys-754. Sumoylation decreases interaction with STAT5. Detected in pituitary (at protein level).

It localises to the membrane. The protein localises to the cytoplasmic vesicle. Its subcellular location is the secretory vesicle membrane. It is found in the perikaryon. The protein resides in the cell projection. It localises to the axon. The protein localises to the synapse. Its subcellular location is the cell membrane. It is found in the endosome. The protein resides in the nucleus. Plays a role in vesicle-mediated secretory processes. Required for normal accumulation of secretory vesicles in hippocampus, pituitary and pancreatic islets. Required for the accumulation of normal levels of insulin-containing vesicles and preventing their degradation. Plays a role in insulin secretion in response to glucose stimuli. Required for normal accumulation of the neurotransmitters norepinephrine, dopamine and serotonin in the brain. In females, but not in males, required for normal accumulation and secretion of pituitary hormones, such as luteinizing hormone (LH) and follicle-stimulating hormone (FSH). Required to maintain normal levels of renin expression and renin release. Seems to lack intrinsic enzyme activity. May regulate catalytic active protein-tyrosine phosphatases such as PTPRA through dimerization. Its function is as follows. ICA512-TMF regulates dynamics and exocytosis of insulin secretory granules (SGs); binding of ICA512-TMF to SNTB2/beta-2-syntrophin is proposed to restrain SGs mobility and exocytosis by tethering them to the actin cytoskeleton depending on UTRN; the function is inhibited by cytoplasmic ICA512-CFF dimerizing with ICA512-TMF and displacing SNTB2. Functionally, ICA512-CCF translocated to the nucleus promotes expression of insulin and other granule-related genes; the function implicates binding to and regulating activity of STAT5B probably by preventing its dephosphorylation and potentially by inducing its sumoylation by recruiting PIAS4. Enhances pancreatic beta-cell proliferation by converging with signaling by STAT5B and STAT3. ICA512-CCF located in the cytoplasm regulates dynamics and exocytosis of insulin secretory granules (SGs) by dimerizing with ICA512-TMF and displacing SNTB2 thus enhancing SGs mobility and exocytosis. The protein is Receptor-type tyrosine-protein phosphatase-like N (PTPRN) of Bos taurus (Bovine).